The primary structure comprises 270 residues: Glutamate racemase (270 aa).

Substrate-binding positions include 7–8 (DS) and 39–40 (YG). The Proton donor/acceptor role is filled by Cys-70. 71-72 (NT) lines the substrate pocket. Residue Cys-194 is the Proton donor/acceptor of the active site. 195 to 196 (TH) is a substrate binding site.

This sequence belongs to the aspartate/glutamate racemases family.

The enzyme catalyses L-glutamate = D-glutamate. The protein operates within cell wall biogenesis; peptidoglycan biosynthesis. In terms of biological role, provides the (R)-glutamate required for cell wall biosynthesis. In Jannaschia sp. (strain CCS1), this protein is Glutamate racemase.